The primary structure comprises 132 residues: Sodium/calcium exchanger regulatory protein 1 (132 aa).

(9Z)-hexadecenoate-binding residues include R126 and Y128.

Belongs to the calycin superfamily. Fatty-acid binding protein (FABP) family. Interacts with Na(+)/Ca(2+) exchanger NCXSQ1; ReP1-NCXSQ phosphorylation does not affect the interaction. Post-translationally, phosphorylated. Phosphorylation may result in the release of the bound fatty acid. In terms of tissue distribution, expressed in the optic nerve (at protein level).

It is found in the cytoplasm. The protein localises to the membrane. Functionally, binds and may transport fatty acids such as palmitoleate. Also binds poly-phosphoinositides including phosphatidylinositol 4-phosphate (PtdIns(4)P), phosphatidylinositol 4,5-bisphosphate (PtdIns(4,5)P2) and phosphatidylinositol 3,4,5-trisphosphate (PtdIns(3,4,5)P3), and phosphatidic acid. When phosphorylated, stimulates the activity of optic nerve Na(+)/Ca(2+) exchanger. The polypeptide is Sodium/calcium exchanger regulatory protein 1 (Doryteuthis pealeii (Longfin inshore squid)).